The sequence spans 964 residues: MLTGRESLVRLIGRRRRSPLPAALALAVPPSRSLQDDAADAEREAAAGGSSSGGGDAAGAAGWVACPVCGESIRGTDYCVNTHLDICLTRGTKRKLTQSTLLDFSFSRKATDDYALNNLNTSDEAEHMEPTDGNVSSDGAFFSLNNDKVNSKGSANASSPGCLHGSPDISETCDTCLPPNVLLPYTENTANNGVVKKCLSHMPSTDATSSTIGLLSVTDSSNSVVVDTVIVGRRFHENIELQEGASITLLRDPQNAKDPDAIKVLYAGYECEQMLGYLPRELAKVLAPLLDRHYIECEGCVVGVPEQQLDHVPIQLKCQKYTDENETYDDLKHPQFLWENFICAVGNGNLLQPSSTRYQTNFSSMITDVMANHSHLFSDKEKSFLDSFQLLPDDGQRLFVRIYTRKGPWFRMSSISYREISDLGQAAMELKLAGYIDMISCMDDLSNYDLKEVIDVLSVPEMKEILKELQKNNVSCTRRHELLSTLLYLYRNGTCTILPKRILKWTGTCIRTSDVADELLWRVQRLFFLNGDQDLSFFLLVDLGLVRFPVYACTISHRVFQEISDLLQYEEAIQVAQVMDQSLDNSNMEMVTRCIELSENRLSTAPKEENATRAEPPPSFFSRFSASSVYSKILTLGVSVYERDRRYTDAIRVLKRLLSTVASDRKRGYWALRLSVDLEHMNRSNESLSIAEAGVIDPWVRAGSKIALQRRVVRLSKPPRRWKVPSYANAVTTNIKEVNIEGRPLNCETGAKNVFYGYDGELCGVEQLALQYYADEGGGWRGTHSEGGIWMTIFGLLMWDAIFSDVPDVFQTKFQTAPLDLETDEFYRSRKDLIESQLKKIQDGIAEEILISSWELHQGTSCRGVNWDRHSLTDLRAAVVCTGGHRLASLLRHLALDYRSWSSGMPDLLLWRFLDERGGGEAKLVEVKGPRDQLSEQQRAWILVLMDFGFDVEVCKVSPVSKRR.

The disordered stretch occupies residues 31-56 (SRSLQDDAADAEREAAAGGSSSGGGD). A UBZ4-type zinc finger spans residues 63–92 (WVACPVCGESIRGTDYCVNTHLDICLTRGT). 4 residues coordinate Zn(2+): Cys-66, Cys-69, His-83, and Cys-87. Mn(2+) contacts are provided by Glu-786, Asp-907, Glu-926, and Val-927. The VRR-NUC domain occupies 844-958 (GIAEEILISS…GFDVEVCKVS (115 aa)).

Belongs to the FAN1 family. It depends on Mn(2+) as a cofactor. Mg(2+) is required as a cofactor.

It catalyses the reaction Hydrolytically removes 5'-nucleotides successively from the 3'-hydroxy termini of 3'-hydroxy-terminated oligonucleotides.. Functionally, nuclease required for the repair of DNA interstrand cross-links (ICL). Acts as a 5'-3' exonuclease that anchors at a cut end of DNA and cleaves DNA successively at every third nucleotide, allowing to excise an ICL from one strand through flanking incisions. This Oryza sativa subsp. japonica (Rice) protein is Fanconi-associated nuclease 1 homolog.